Reading from the N-terminus, the 186-residue chain is Guanylate kinase (186 aa).

The region spanning 5-183 is the Guanylate kinase-like domain; the sequence is GNLTVLTGPS…AFKEIEGFMG (179 aa). Residue 12–19 coordinates ATP; that stretch reads GPSGVGKG.

The protein belongs to the guanylate kinase family.

The protein resides in the cytoplasm. The catalysed reaction is GMP + ATP = GDP + ADP. In terms of biological role, essential for recycling GMP and indirectly, cGMP. This chain is Guanylate kinase, found in Prochlorococcus marinus (strain NATL2A).